Consider the following 196-residue polypeptide: Metalloproteinase inhibitor 2 (196 aa).

A signal peptide spans 1 to 2; that stretch reads RA. A Zn(2+)-binding site is contributed by Cys-3. Involved in metalloproteinase-binding stretches follow at residues 3–6 and 71–72; these read CSCS and SA. Intrachain disulfides connect Cys-3–Cys-74, Cys-5–Cys-103, Cys-15–Cys-128, Cys-130–Cys-177, Cys-135–Cys-140, and Cys-148–Cys-169. The NTR domain occupies 3–128; the sequence is CSCSPVHPQQ…SLNHRYQMGC (126 aa).

This sequence belongs to the protease inhibitor I35 (TIMP) family. As to quaternary structure, interacts (via the C-terminal) with MMP2 (via the C-terminal PEX domain); the interaction inhibits the MMP2 activity. In terms of processing, the activity of TIMP2 is dependent on the presence of disulfide bonds.

It localises to the secreted. In terms of biological role, complexes with metalloproteinases (such as collagenases) and irreversibly inactivates them by binding to their catalytic zinc cofactor. The polypeptide is Metalloproteinase inhibitor 2 (TIMP2) (Cricetulus longicaudatus (Long-tailed dwarf hamster)).